The primary structure comprises 402 residues: TBC1 domain family member 20 (402 aa).

A disordered region spans residues 1–27 (MALRPSKGDGSAGRWDRGAGKADFNAK). A compositionally biased stretch (basic and acidic residues) spans 14-26 (RWDRGAGKADFNA). The Rab-GAP TBC domain maps to 59–245 (LLTDEIRCQV…RLYDFFLACH (187 aa)). The next 2 helical transmembrane spans lie at 237-257 (LYDF…AVIV) and 366-386 (FVKL…LAVV).

The protein resides in the membrane. GTPase-activating protein specific for Rab1 and Rab2 small GTPase families for which it can accelerate the intrinsic GTP hydrolysis rate by more than five orders of magnitude. Also shows GAP activity for RAB18 GTPase. Promotes RAB18 dissociation from the endoplasmic reticulum (ER) membrane into the cytosol, probably through stimulating RAB18 GTP-hydrolysis. Involved in maintaining endoplasmic reticulum structure. The protein is TBC1 domain family member 20 of Mus musculus (Mouse).